A 35-amino-acid polypeptide reads, in one-letter code: MSDINATRLPIWGIGCNPCVGDDVTSVLTRGEALC.

Residues 1–10 (MSDINATRLP) constitute a propeptide that is removed on maturation. Position 11 is a (3R,4R)-4,5-dihydroxyisoleucine; in form alpha-amanitin (I11). (3R,4S)-4-hydroxyisoleucine; in form gamma-amanitin is present on I11. Residues 11–18 (IWGIGCNP) constitute a cross-link (cyclopeptide (Ile-Pro)). The segment at residues 12-16 (WGIGC) is a cross-link (2'-cysteinyl-6'-hydroxytryptophan sulfoxide (Trp-Cys)). A 4-hydroxyproline modification is found at P18. Residues 19 to 35 (CVGDDVTSVLTRGEALC) constitute a propeptide that is removed on maturation.

It belongs to the MSDIN fungal toxin family. In terms of processing, processed by the macrocyclase-peptidase enzyme POPB to yield a toxic cyclic octapeptide. POPB first removes 10 residues from the N-terminus. Conformational trapping of the remaining peptide forces the enzyme to release this intermediate rather than proceed to macrocyclization. The enzyme rebinds the remaining peptide in a different conformation and catalyzes macrocyclization of the N-terminal 8 residues. As to expression, expressed in basidiocarps.

Major toxin belonging to the bicyclic octapeptides amatoxins that acts by binding non-competitively to RNA polymerase II and greatly slowing the elongation of transcripts from target promoters. In Amanita exitialis (Guangzhou destroying angel), this protein is Alpha-amanitin proprotein 1.